The sequence spans 594 residues: UvrABC system protein C (594 aa).

Residues 13-99 (HSSGVYQYFD…IKQLKPKYNI (87 aa)) form the GIY-YIG domain. A UVR domain is found at 205–240 (DKLIKELELKMERLSNNLRFEEALIYRDRIAKIQKI).

The protein belongs to the UvrC family. Interacts with UvrB in an incision complex.

The protein localises to the cytoplasm. The UvrABC repair system catalyzes the recognition and processing of DNA lesions. UvrC both incises the 5' and 3' sides of the lesion. The N-terminal half is responsible for the 3' incision and the C-terminal half is responsible for the 5' incision. In Helicobacter pylori (strain Shi470), this protein is UvrABC system protein C.